The sequence spans 496 residues: Serine/threonine-protein kinase chk1 (496 aa).

The Protein kinase domain occupies 10-272; the sequence is YHIGREIGTG…VKHVVQHPWL (263 aa). ATP is bound by residues 16–24 and Lys-38; that span reads IGTGAFASV. The active-site Proton acceptor is Asp-137.

The protein belongs to the protein kinase superfamily. CAMK Ser/Thr protein kinase family. NIM1 subfamily. As to quaternary structure, interacts with crb2. Interacts with rad3. Interacts with rfp1. Phosphorylated.

Its subcellular location is the nucleus. It catalyses the reaction L-seryl-[protein] + ATP = O-phospho-L-seryl-[protein] + ADP + H(+). It carries out the reaction L-threonyl-[protein] + ATP = O-phospho-L-threonyl-[protein] + ADP + H(+). Serine/threonine-protein kinase which is required for checkpoint-mediated cell cycle arrest and activation of DNA repair in response to the presence of DNA damage or unreplicated DNA. May also negatively regulate cell cycle progression during unperturbed cell cycles. Binds to and phosphorylates CDC25. This leads to negative regulation of CDC25 and prevents mitotic entry. In Schizosaccharomyces pombe (strain 972 / ATCC 24843) (Fission yeast), this protein is Serine/threonine-protein kinase chk1 (chk1).